We begin with the raw amino-acid sequence, 1165 residues long: MVHAPARSEDIREEVAELLGVDVDAVQPGSNLIGQGLDSIRIMTLAGRWRRRGIAVDFATLAETPTIEAWAQLVTAGRQDTDSAAPPADSSGDPSGETEPFALAPMQHAMWVGRQDNQQLGGVAGHLYVEFDAGLLDSGRLRAAATALARRHPMLRVRFLPDGTQCITPAVECGDFPVHVEDLRELGTDEVERRLTALREAKSHQQLDGAVFELTVTLLPGGRSRLHVDLDMQAADAMSYRTLMADLAALYRGCDLPELSYTYRQYRHAVEAQDAQPQPRRDADRDWWARRLPELPDPPALPITAGRGANRSTRRWHWLDPQTRDALFARAQARGITPAMALAAGFANTLARWSSNSRFLLNVPLFGRQPLHPDVDALVGDFTSSLLLDVDLVGAHTAAARAQVVQDAMRTAAAHSAYSGLSVLRDLSRHRGTQVLAPVVFTSALGLGELFSPEVTGQFGTPAWIISQGPQVLLDAQVTEFDGGVLVNWDVREGFFPPGVIDAMFAYHIDELLRLASADDAWDAPGPAALPEAQRAVREAINGRTAPPSGEALHDRFFRQAERQPDAPAVFAGSGDLSYAQLRDQALAVAAALRAAGAGAGDTVAVVGPKSAEQIPAVLGILSVGAAYLPIGADQPRDRAERILQSGRVRLALVCGGRQLSLPVPGLVLADVLGGAPADAEIACARVDPGELAYVLFTSGSTGEPKGVEVTHDAAMNTVEFIGRHFEIGPADRCLALSTLEGDISVMDVFVTLRTGGAIVVVDEAQRRDPDAWARLIDTHRVTVLHFMPGWLEMLVEVGRGRLSSVRVVPTGGDWVRPEVVRRLRAEAPGLRFAGLGGATETPVHNTIFEVTEPIPADWTALPFGVPLPNNVCRVVGDTGGDCPEWVPGELWVSGRGIARGYRGRPDLTAQRFVEHDGRTSYRTGDLVRYRPDGTLEFVGRADHRVKISGYRVELGEIESALRRVPGVRTAVAALIAGAGESDVLAAQVGTDDPALTGEQVRQYLADLVPAHMIPRHVAVVERIGFTAAGKLDRRAVARELHSVVGQSHSPGHRAASTPLEGALALILGDLLGRDDVGVDDDFFALGGDSVLATQAVARIRAWLDAPDVMVADMFANRTVSALAAVLRAAEDDPDRLDHVAELYLEVIGMDAESVLTATRQTTKS.

Residues 5 to 78 (PARSEDIREE…AWAQLVTAGR (74 aa)) enclose the Carrier 1 domain. O-(pantetheine 4'-phosphoryl)serine is present on Ser39. The interval 77–100 (GRQDTDSAAPPADSSGDPSGETEP) is disordered. A condensation/cyclization region spans residues 97-393 (ETEPFALAPM…SSLLLDVDLV (297 aa)). Residues 578 to 973 (SYAQLRDQAL…RVPGVRTAVA (396 aa)) form an adenylation region. In terms of domain architecture, Carrier 2 spans 1055 to 1131 (AASTPLEGAL…ALAAVLRAAE (77 aa)). Position 1090 is an O-(pantetheine 4'-phosphoryl)serine (Ser1090).

It belongs to the ATP-dependent AMP-binding enzyme family. MbtB subfamily. The cofactor is pantetheine 4'-phosphate. 4'-phosphopantetheine is transferred from CoA to a specific serine in each of the two carrier protein domains, leading to their activation from apo to holo forms.

Its pathway is siderophore biosynthesis; mycobactin biosynthesis. Functionally, involved in the initial steps of the mycobactin biosynthetic pathway. Putatively couples activated salicylic acid with serine or threonine and cyclizes this precursor to the hydroxyphenyloxazoline ring system present in this class of siderophores. The polypeptide is Phenyloxazoline synthase MbtB (mbtB) (Mycolicibacterium paratuberculosis (strain ATCC BAA-968 / K-10) (Mycobacterium paratuberculosis)).